Reading from the N-terminus, the 453-residue chain is Bifunctional protein GlmU (453 aa).

Positions 1-227 (MAVSVIILAA…SIEVMGVNDR (227 aa)) are pyrophosphorylase. UDP-N-acetyl-alpha-D-glucosamine contacts are provided by residues 8 to 11 (LAAG), K22, Q73, 78 to 79 (GT), 100 to 102 (SGD), G137, E152, N167, and N225. D102 provides a ligand contact to Mg(2+). Position 225 (N225) interacts with Mg(2+). A linker region spans residues 228–248 (QQLAYLERFYQKREAARLMGE). The interval 249-453 (GVSLSDPDRF…WPGWKRPSKK (205 aa)) is N-acetyltransferase. Residues R331 and K349 each coordinate UDP-N-acetyl-alpha-D-glucosamine. The active-site Proton acceptor is H361. The UDP-N-acetyl-alpha-D-glucosamine site is built by Y364 and N375. Acetyl-CoA contacts are provided by residues A378, 384–385 (NY), S403, A421, and R438. The tract at residues 430-453 (PPGELTLSRTPQKSWPGWKRPSKK) is disordered.

The protein in the N-terminal section; belongs to the N-acetylglucosamine-1-phosphate uridyltransferase family. In the C-terminal section; belongs to the transferase hexapeptide repeat family. Homotrimer. Mg(2+) is required as a cofactor.

It localises to the cytoplasm. It carries out the reaction alpha-D-glucosamine 1-phosphate + acetyl-CoA = N-acetyl-alpha-D-glucosamine 1-phosphate + CoA + H(+). The enzyme catalyses N-acetyl-alpha-D-glucosamine 1-phosphate + UTP + H(+) = UDP-N-acetyl-alpha-D-glucosamine + diphosphate. Its pathway is nucleotide-sugar biosynthesis; UDP-N-acetyl-alpha-D-glucosamine biosynthesis; N-acetyl-alpha-D-glucosamine 1-phosphate from alpha-D-glucosamine 6-phosphate (route II): step 2/2. It participates in nucleotide-sugar biosynthesis; UDP-N-acetyl-alpha-D-glucosamine biosynthesis; UDP-N-acetyl-alpha-D-glucosamine from N-acetyl-alpha-D-glucosamine 1-phosphate: step 1/1. It functions in the pathway bacterial outer membrane biogenesis; LPS lipid A biosynthesis. Catalyzes the last two sequential reactions in the de novo biosynthetic pathway for UDP-N-acetylglucosamine (UDP-GlcNAc). The C-terminal domain catalyzes the transfer of acetyl group from acetyl coenzyme A to glucosamine-1-phosphate (GlcN-1-P) to produce N-acetylglucosamine-1-phosphate (GlcNAc-1-P), which is converted into UDP-GlcNAc by the transfer of uridine 5-monophosphate (from uridine 5-triphosphate), a reaction catalyzed by the N-terminal domain. The chain is Bifunctional protein GlmU from Nitrosococcus oceani (strain ATCC 19707 / BCRC 17464 / JCM 30415 / NCIMB 11848 / C-107).